A 1030-amino-acid chain; its full sequence is Semaphorin-6A (1030 aa).

Residues 1–18 (MRSEALLLYFTLLHFAGA) form the signal peptide. The Extracellular portion of the chain corresponds to 19–649 (GFPEDSEPIS…KGHDQLVPVT (631 aa)). A Sema domain is found at 24-512 (SEPISISHGN…FSTCVIKVPL (489 aa)). 3 N-linked (GlcNAc...) asparagine glycosylation sites follow: N33, N49, and N65. 4 disulfides stabilise this stretch: C107-C117, C135-C144, C258-C369, and C283-C328. N-linked (GlcNAc...) asparagine glycosylation occurs at N282. N-linked (GlcNAc...) asparagine glycosylation is found at N434 and N461. Cystine bridges form between C477-C506, C515-C533, C521-C568, and C525-C542. The helical transmembrane segment at 650–670 (LLAIAVILAFVMGAVFSGITV) threads the bilayer. Residues 671-1030 (YCVCDHRRKD…TSMKPNDACT (360 aa)) are Cytoplasmic-facing. S698 carries the post-translational modification Phosphoserine. Disordered stretches follow at residues 754 to 778 (ALPT…REWE), 860 to 897 (SSKS…SLSQ), and 912 to 1030 (YGVD…DACT). Residues 920-936 (YPTNSLTRSHQATTLKR) are compositionally biased toward polar residues. Residues 937 to 952 (NNTNSSNSSHLSRNQS) show a composition bias toward low complexity. Phosphoserine is present on S952. Polar residues-rich tracts occupy residues 970–997 (QVHS…SLTR) and 1018–1030 (PLST…DACT).

Belongs to the semaphorin family. As to quaternary structure, active as a homodimer or oligomer. The SEMA6A homodimer interacts with a PLXNA2 homodimer, giving rise to a heterotetramer. Interacts with EVL. In terms of assembly, (Microbial infection) Interacts with P.sordellii toxin TcsL; semaphorins SEMA6A and SEMA6B constitute the major host receptors for TcsL in the vascular endothelium.

It is found in the cell membrane. In terms of biological role, cell surface receptor for PLXNA2 that plays an important role in cell-cell signaling. Required for normal granule cell migration in the developing cerebellum. Promotes reorganization of the actin cytoskeleton and plays an important role in axon guidance in the developing central nervous system. Can act as repulsive axon guidance cue. Has repulsive action towards migrating granular neurons. May play a role in channeling sympathetic axons into the sympathetic chains and controlling the temporal sequence of sympathetic target innervation. (Microbial infection) Acts as a receptor for P.sordellii toxin TcsL in the in the vascular endothelium. This is Semaphorin-6A (SEMA6A) from Homo sapiens (Human).